Reading from the N-terminus, the 440-residue chain is Serine hydroxymethyltransferase (440 aa).

Residues Leu119 and Gly123 to Leu125 each bind (6S)-5,6,7,8-tetrahydrofolate. An N6-(pyridoxal phosphate)lysine modification is found at Lys228. Ser370–Phe372 lines the (6S)-5,6,7,8-tetrahydrofolate pocket.

This sequence belongs to the SHMT family. Homodimer. Pyridoxal 5'-phosphate serves as cofactor.

The protein resides in the cytoplasm. The enzyme catalyses (6R)-5,10-methylene-5,6,7,8-tetrahydrofolate + glycine + H2O = (6S)-5,6,7,8-tetrahydrofolate + L-serine. It participates in one-carbon metabolism; tetrahydrofolate interconversion. Its pathway is amino-acid biosynthesis; glycine biosynthesis; glycine from L-serine: step 1/1. Its function is as follows. Catalyzes the reversible interconversion of serine and glycine with tetrahydrofolate (THF) serving as the one-carbon carrier. This reaction serves as the major source of one-carbon groups required for the biosynthesis of purines, thymidylate, methionine, and other important biomolecules. Also exhibits THF-independent aldolase activity toward beta-hydroxyamino acids, producing glycine and aldehydes, via a retro-aldol mechanism. The sequence is that of Serine hydroxymethyltransferase from Chlorobaculum parvum (strain DSM 263 / NCIMB 8327) (Chlorobium vibrioforme subsp. thiosulfatophilum).